Consider the following 246-residue polypeptide: Small ribosomal subunit protein uS2 (246 aa).

It belongs to the universal ribosomal protein uS2 family.

This Stutzerimonas stutzeri (strain A1501) (Pseudomonas stutzeri) protein is Small ribosomal subunit protein uS2.